The chain runs to 411 residues: Probable G-protein coupled receptor AH9.1 (411 aa).

The Cytoplasmic segment spans residues 1-18 (MLLFLLRRIFDCRYKYKL). The chain crosses the membrane as a helical span at residues 19 to 39 (FVKALVLFLTIVYNAGLVHFF). The Extracellular portion of the chain corresponds to 40–55 (FRTTSLDDSPEMNHVD). A helical transmembrane segment spans residues 56-76 (YVAHVIVMPIVLSIGMINQCL). At 77–87 (NVCTLLHIRTS) the chain is on the cytoplasmic side. The helical transmembrane segment at 88 to 108 (IFLYLKASAIADILSIVAFIP) threads the bilayer. The Extracellular segment spans residues 109–131 (FLFRHAKLIDPSWELGMFYHAHL). The helical transmembrane segment at 132-152 (ELPLINALISASALNIVAMTV) threads the bilayer. The Cytoplasmic segment spans residues 153 to 176 (DRYVSVCHPIKFFQNNETKPSRRR). The chain crosses the membrane as a helical span at residues 177–197 (TMLIIVMIYFIALMIYFPSVF). Over 198–229 (QKKLGVVTDALTNKTIYTIVRNEDVEALQVFK) the chain is Extracellular. N210 carries N-linked (GlcNAc...) asparagine glycosylation. The chain crosses the membrane as a helical span at residues 230–250 (FYLIVRECICRWGPVLLLVIL). The Cytoplasmic segment spans residues 251 to 299 (NMCVVRGLRKIDKRNWFWRQPSQNSRTETLAQRQLRSPRDDRSRISVLL). The chain crosses the membrane as a helical span at residues 300-320 (FVTSATFIICNIPASVISFFV). The Extracellular segment spans residues 321-333 (RRVSGSLFWQIFR). The helical transmembrane segment at 334-354 (AIANLLQVTSYLYNFYLYALC) threads the bilayer. Over 355-411 (SSEYRHAFLRLFGCRSSLSPTSTGDSPTVRVSVHGKRCHQAVVLLGNENHENPVDEV) the chain is Cytoplasmic.

This sequence belongs to the G-protein coupled receptor 1 family.

It localises to the cell membrane. Functionally, not known. Putative receptor. This Caenorhabditis elegans protein is Probable G-protein coupled receptor AH9.1.